Consider the following 195-residue polypeptide: dITP/XTP pyrophosphatase (195 aa).

Position 9-14 (9-14) interacts with substrate; it reads TGNKGK. Mg(2+) contacts are provided by Glu-41 and Asp-70. Catalysis depends on Asp-70, which acts as the Proton acceptor. Substrate contacts are provided by residues Ser-71, 155–158, Lys-178, and 183–184; these read FGYD and HR.

Belongs to the HAM1 NTPase family. Homodimer. It depends on Mg(2+) as a cofactor.

It catalyses the reaction XTP + H2O = XMP + diphosphate + H(+). The enzyme catalyses dITP + H2O = dIMP + diphosphate + H(+). It carries out the reaction ITP + H2O = IMP + diphosphate + H(+). Its function is as follows. Pyrophosphatase that catalyzes the hydrolysis of nucleoside triphosphates to their monophosphate derivatives, with a high preference for the non-canonical purine nucleotides XTP (xanthosine triphosphate), dITP (deoxyinosine triphosphate) and ITP. Seems to function as a house-cleaning enzyme that removes non-canonical purine nucleotides from the nucleotide pool, thus preventing their incorporation into DNA/RNA and avoiding chromosomal lesions. The sequence is that of dITP/XTP pyrophosphatase from Haemophilus influenzae (strain ATCC 51907 / DSM 11121 / KW20 / Rd).